A 690-amino-acid polypeptide reads, in one-letter code: Translation factor GUF1, mitochondrial (690 aa).

Positions 40–68 (SVTVPAARRHNSTKSTNSTTSTNSTTATS) are disordered. Over residues 52–68 (TKSTNSTTSTNSTTATS) the composition is skewed to low complexity. Positions 89 to 272 (ERYRNFCIVA…AVIKKMPAPV (184 aa)) constitute a tr-type G domain. GTP contacts are provided by residues 98–105 (AHIDHGKS), 165–169 (DTPGH), and 219–222 (NKID).

It belongs to the TRAFAC class translation factor GTPase superfamily. Classic translation factor GTPase family. LepA subfamily.

The protein resides in the mitochondrion inner membrane. The enzyme catalyses GTP + H2O = GDP + phosphate + H(+). Functionally, promotes mitochondrial protein synthesis. May act as a fidelity factor of the translation reaction, by catalyzing a one-codon backward translocation of tRNAs on improperly translocated ribosomes. Binds to mitochondrial ribosomes in a GTP-dependent manner. This Sordaria macrospora (strain ATCC MYA-333 / DSM 997 / K(L3346) / K-hell) protein is Translation factor GUF1, mitochondrial.